The chain runs to 111 residues: Large ribosomal subunit protein uL23 (111 aa).

It belongs to the universal ribosomal protein uL23 family. In terms of assembly, part of the 50S ribosomal subunit. Contacts protein L29, and trigger factor when it is bound to the ribosome.

In terms of biological role, one of the early assembly proteins it binds 23S rRNA. One of the proteins that surrounds the polypeptide exit tunnel on the outside of the ribosome. Forms the main docking site for trigger factor binding to the ribosome. This chain is Large ribosomal subunit protein uL23, found in Chlamydia trachomatis serovar A (strain ATCC VR-571B / DSM 19440 / HAR-13).